The sequence spans 801 residues: Xaa-Pro dipeptidyl-peptidase (801 aa).

Residues S371, D491, and H522 each act as charge relay system in the active site.

The protein belongs to the peptidase S15 family. Homodimer.

The protein resides in the cytoplasm. It catalyses the reaction Hydrolyzes Xaa-Pro-|- bonds to release unblocked, N-terminal dipeptides from substrates including Ala-Pro-|-p-nitroanilide and (sequentially) Tyr-Pro-|-Phe-Pro-|-Gly-Pro-|-Ile.. Functionally, removes N-terminal dipeptides sequentially from polypeptides having unsubstituted N-termini provided that the penultimate residue is proline. The polypeptide is Xaa-Pro dipeptidyl-peptidase (Ligilactobacillus salivarius (strain UCC118) (Lactobacillus salivarius)).